Reading from the N-terminus, the 367-residue chain is MNAVQKKIKVLCVDDSALIRSLMTEIINSQPDMEVCATAPDPLVARELIKQHNPDVLTLDVEMPRMDGLDFLEKLMRLRPMPVVMVSSLTERGSEITLRALELGAVDFVTKPRVGIRDGMLDYSEKLADKVRAASRARVRQNPQPHAAAAAAAHGHAGAAAPLINNPLVSTEKLIIVGASTGGTEAIREVLTPLPPDAPAVLIAQHMPPGFTRSFAQRLNGLCRISVKEAEHGERVLPGHAYIAPGHAHLLLARSGANYIAHLSDEPPVNRHRPSVDVLFRSAAQHAGKNALGVILTGMGRDGAAGLLEMKKAGAYTFAQDEASCVVFGMPREAIAMGGVDDVAPLSDMSRRIMARLASMGDRVQRV.

Residues 9–126 (KVLCVDDSAL…RDGMLDYSEK (118 aa)) form the Response regulatory domain. At Asp60 the chain carries 4-aspartylphosphate. The 193-residue stretch at 168-360 (LVSTEKLIIV…RRIMARLASM (193 aa)) folds into the CheB-type methylesterase domain. Residues Ser180, His206, and Asp302 contribute to the active site.

This sequence belongs to the CheB family. Post-translationally, phosphorylated by CheA. Phosphorylation of the N-terminal regulatory domain activates the methylesterase activity.

It localises to the cytoplasm. The enzyme catalyses [protein]-L-glutamate 5-O-methyl ester + H2O = L-glutamyl-[protein] + methanol + H(+). It carries out the reaction L-glutaminyl-[protein] + H2O = L-glutamyl-[protein] + NH4(+). Functionally, involved in chemotaxis. Part of a chemotaxis signal transduction system that modulates chemotaxis in response to various stimuli. Catalyzes the demethylation of specific methylglutamate residues introduced into the chemoreceptors (methyl-accepting chemotaxis proteins or MCP) by CheR. Also mediates the irreversible deamidation of specific glutamine residues to glutamic acid. The protein is Protein-glutamate methylesterase/protein-glutamine glutaminase 1 of Burkholderia pseudomallei (strain K96243).